Here is a 3790-residue protein sequence, read N- to C-terminus: Transcription-associated protein 1 (3790 aa).

HEAT repeat units lie at residues 98–136, 335–381, 740–778, 1185–1223, 1332–1370, and 1826–1864; these read RQHV…HFRP, TDLR…HVRQ, DLLY…ELCL, AKAT…IQSK, IGYK…GVTL, and AIHK…AMPL. The FAT domain occupies 2610–3173; sequence LLAYLGKSHN…YFPIRTLYLT (564 aa). The 325-residue stretch at 3429–3753 folds into the PI3K/PI4K catalytic domain; sequence MPRVEIVQKN…AVDIIMTRFN (325 aa). The interval 3435 to 3441 is G-loop; the sequence is VQKNNTA. The catalytic loop stretch occupies residues 3616 to 3624; it reads NLTRLNADM. Residues 3636–3661 form an activation loop region; sequence ISYFKFDVNDDKCQLNQHRPVPFRLT. An FATC domain is found at 3758–3790; sequence FDSIENKKISVLVQSATNIDNLCRMDPAWHPWL.

Belongs to the PI3/PI4-kinase family. TRA1 subfamily. In terms of assembly, component of the Tip60 chromatin-remodeling complex which contains the catalytic subunit Tip60 and the subunits Domino, Tra1, Brd8, E(Pc), DMAP1, Pontin, Reptin, Ing3, Act87E, BAP55, Mrg15, MrgBP, Gas41 and YL-1. Probable component of some SAGA complex. Interacts with Spt3, Gcn5, Ada3 and Ada2b. Ubiquitous.

It localises to the nucleus. The protein localises to the cytoplasm. Its subcellular location is the chromosome. Functionally, part of the Tip60 chromatin-remodeling complex which is involved in DNA repair. Upon induction of DNA double-strand breaks, this complex acetylates phosphorylated H2AV in nucleosomes and exchanges it with unmodified H2AV. During wing development, required for activity of Notch and its coactivator mam. Function in promoting mam function is likely to involve both the Tip60 and SAGA complexes. The chain is Transcription-associated protein 1 (Nipped-A) from Drosophila melanogaster (Fruit fly).